Consider the following 135-residue polypeptide: Transcription antitermination protein NusB (135 aa).

It belongs to the NusB family.

In terms of biological role, involved in transcription antitermination. Required for transcription of ribosomal RNA (rRNA) genes. Binds specifically to the boxA antiterminator sequence of the ribosomal RNA (rrn) operons. The protein is Transcription antitermination protein NusB of Clostridium perfringens (strain SM101 / Type A).